The primary structure comprises 322 residues: MKTTFLEFEQPIAELEAKIEELRFVQDDSAVDISEEISRLASKSQQLTKDLYANLTPWQVAQIARHPQRPYTLDYVREIFTDFHELHGDRTFADDLSIVGGLARFNGQACMVIGHQKGRDTKERALRNFGMSKPEGYRKAKRLMELADKFGLPIFTFVDTPGAFPGIDAEERGQSEAIGHNLFVMAGLKVPLIATIIGEGGSGGALAIAMGDSVIMLQFATYAVISPEGCASILWKTAEKAPEAAEALGLTAHRLKALGLIDKIVNEPLGGAHRDPKSMATMLKRALAESLRQFQGMKTSELQARRHERLMAYGKFKETEGR.

The region spanning Arg39 to Gln293 is the CoA carboxyltransferase C-terminal domain.

It belongs to the AccA family. In terms of assembly, acetyl-CoA carboxylase is a heterohexamer composed of biotin carboxyl carrier protein (AccB), biotin carboxylase (AccC) and two subunits each of ACCase subunit alpha (AccA) and ACCase subunit beta (AccD).

It localises to the cytoplasm. The catalysed reaction is N(6)-carboxybiotinyl-L-lysyl-[protein] + acetyl-CoA = N(6)-biotinyl-L-lysyl-[protein] + malonyl-CoA. It participates in lipid metabolism; malonyl-CoA biosynthesis; malonyl-CoA from acetyl-CoA: step 1/1. Functionally, component of the acetyl coenzyme A carboxylase (ACC) complex. First, biotin carboxylase catalyzes the carboxylation of biotin on its carrier protein (BCCP) and then the CO(2) group is transferred by the carboxyltransferase to acetyl-CoA to form malonyl-CoA. The protein is Acetyl-coenzyme A carboxylase carboxyl transferase subunit alpha of Ralstonia pickettii (strain 12J).